A 420-amino-acid chain; its full sequence is Glutamyl-tRNA reductase (420 aa).

Substrate contacts are provided by residues 49–52, serine 107, 112–114, and glutamine 118; these read TCNR and EPQ. Cysteine 50 (nucleophile) is an active-site residue. 187–192 contributes to the NADP(+) binding site; sequence GAGETI.

This sequence belongs to the glutamyl-tRNA reductase family. Homodimer.

The enzyme catalyses (S)-4-amino-5-oxopentanoate + tRNA(Glu) + NADP(+) = L-glutamyl-tRNA(Glu) + NADPH + H(+). The protein operates within porphyrin-containing compound metabolism; protoporphyrin-IX biosynthesis; 5-aminolevulinate from L-glutamyl-tRNA(Glu): step 1/2. Functionally, catalyzes the NADPH-dependent reduction of glutamyl-tRNA(Glu) to glutamate 1-semialdehyde (GSA). This Methylococcus capsulatus (strain ATCC 33009 / NCIMB 11132 / Bath) protein is Glutamyl-tRNA reductase.